A 315-amino-acid chain; its full sequence is Ribosomal RNA small subunit methyltransferase H (315 aa).

Residues 37-39 (GGH), aspartate 57, phenylalanine 83, aspartate 105, and glutamine 112 contribute to the S-adenosyl-L-methionine site.

It belongs to the methyltransferase superfamily. RsmH family.

It is found in the cytoplasm. The enzyme catalyses cytidine(1402) in 16S rRNA + S-adenosyl-L-methionine = N(4)-methylcytidine(1402) in 16S rRNA + S-adenosyl-L-homocysteine + H(+). In terms of biological role, specifically methylates the N4 position of cytidine in position 1402 (C1402) of 16S rRNA. The sequence is that of Ribosomal RNA small subunit methyltransferase H from Pseudomonas fluorescens (strain ATCC BAA-477 / NRRL B-23932 / Pf-5).